Here is a 265-residue protein sequence, read N- to C-terminus: Osteoclast-associated immunoglobulin-like receptor (265 aa).

The N-terminal stretch at 1 to 18 (MVLSLILQLSTLWPACRA) is a signal peptide. Over 19–231 (DFTPTAPLAS…LDYTQGNLIR (213 aa)) the chain is Extracellular. Ig-like domains are found at residues 22–115 (PTAP…SQPS) and 125–218 (QLPR…SFEG). N-linked (GlcNAc...) asparagine glycosylation occurs at N47. C52 and C99 form a disulfide bridge. A glycan (N-linked (GlcNAc...) asparagine) is linked at N144. A helical transmembrane segment spans residues 232 to 248 (LGLAGMVLICLGIIVTC). Residues 249–265 (DWHSRSSAFDGLLPQQN) are Cytoplasmic-facing.

It belongs to the leukocyte receptor complex/polymeric immunoglobulin receptor (PIR/LRC) family. Specifically expressed in preosteoclasts or mature osteoclasts.

It localises to the cell membrane. Its function is as follows. Regulator of osteoclastogenesis which plays an important bone-specific function in osteoclast differentiation. This is Osteoclast-associated immunoglobulin-like receptor (Oscar) from Mus musculus (Mouse).